The following is a 251-amino-acid chain: Cold shock-induced protein TIR2 (251 aa).

The first 18 residues, 1–18 (MAYIKIALLAAIAALASA), serve as a signal peptide directing secretion. The stretch at 207-225 (ASAISQISDGQVQATSTVS) is one PIR1/2/3 repeat. Residue glycine 231 is the site of GPI-anchor amidated glycine attachment. The propeptide at 232–251 (AAKAVIGMGAGVMAAAAMLL) is removed in mature form.

It belongs to the SRP1/TIP1 family. In terms of processing, the GPI-anchor is attached to the protein in the endoplasmic reticulum and serves to target the protein to the cell surface. There, the glucosamine-inositol phospholipid moiety is cleaved off and the GPI-modified mannoprotein is covalently attached via its lipidless GPI glycan remnant to the 1,6-beta-glucan of the outer cell wall layer. Covalently linked to beta-1,3-glucan of the inner cell wall layer via an alkali-sensitive ester linkage between the gamma-carboxyl group of glutamic acids, arising from a specific glutamine within the PIR1/2/3 repeat, and hydroxyl groups of glucoses of beta-1,3-glucan chains.

It is found in the secreted. The protein resides in the cell wall. It localises to the membrane. In terms of biological role, component of the cell wall. The polypeptide is Cold shock-induced protein TIR2 (TIR2) (Saccharomyces cerevisiae (strain ATCC 204508 / S288c) (Baker's yeast)).